The following is a 342-amino-acid chain: Serpentine receptor class gamma-69 (342 aa).

A run of 7 helical transmembrane segments spans residues 11–31 (MAGL…SVVV), 51–71 (SLLY…HFLI), 106–126 (PIAI…IVAA), 140–160 (LFVL…IPCK), 191–211 (IAAV…LIAL), 222–242 (AEIS…IYAF), and 269–289 (FAID…STTV).

Belongs to the nematode receptor-like protein srg family.

Its subcellular location is the membrane. In Caenorhabditis elegans, this protein is Serpentine receptor class gamma-69 (srg-69).